A 476-amino-acid polypeptide reads, in one-letter code: MDEAGSSASGGGFRPGVDSLDEPPNSRIFLVISKYTPESVLRERFSPFGDIQDIWVVRDKHTKESKGIAFVKFARSSQACRAMEEMHGQCLGPNDTKPIKVFIAQSRSSGSHRDVEDEELTRIFVMIPKSYTEEDLREKFKVYGDIEYCSIIKNKVTGESKGLGYVRYLKPSQAAQAIENCDRSFRAILAEPKNKASESSEQDYYSNMRQEALGHEPRVNMFPFVGEQQSEFSSFDKNDSRGQEAISKRLSVVSRVPFTEEQLFSIFDIVPGLEYCEVQRDPYSNYGHGVVQYFNVASAIYAKYKLHGFQYPPGNRIGVSFIDDGSNATDLLRKMATQMVAAQLASMVWNNPSQQQFMQFGGSSGSQLPQIQTDVVLPSCKKKAPAETPVKERLFIVFNPHPLPLDVLEDIFCRFGNLIEVYLVSGKNVGYAKYADRISANDAIATLHGKILNGVRLKVMLADSPREESNKRQRTY.

Positions 1–20 (MDEAGSSASGGGFRPGVDSL) are disordered. 2 consecutive RRM domains span residues 26–106 (SRIF…IAQS) and 121–195 (TRIF…PKNK). A Glycyl lysine isopeptide (Lys-Gly) (interchain with G-Cter in SUMO2) cross-link involves residue K34. Phosphoserine occurs at positions 199 and 464. An RRM 3 domain is found at 392–464 (ERLFIVFNPH…VRLKVMLADS (73 aa)).

The protein localises to the cytoplasm. Its subcellular location is the nucleus. Functionally, RNA-binding protein with binding specificity for poly(C). May play an important role in neural development. This chain is RNA-binding protein 45 (RBM45), found in Homo sapiens (Human).